Reading from the N-terminus, the 141-residue chain is Nucleoside diphosphate kinase (141 aa).

ATP contacts are provided by K11, F59, R87, T93, R104, and N114. Residue H117 is the Pros-phosphohistidine intermediate of the active site.

It belongs to the NDK family. Homotetramer. The cofactor is Mg(2+).

Its subcellular location is the cytoplasm. It carries out the reaction a 2'-deoxyribonucleoside 5'-diphosphate + ATP = a 2'-deoxyribonucleoside 5'-triphosphate + ADP. It catalyses the reaction a ribonucleoside 5'-diphosphate + ATP = a ribonucleoside 5'-triphosphate + ADP. Major role in the synthesis of nucleoside triphosphates other than ATP. The ATP gamma phosphate is transferred to the NDP beta phosphate via a ping-pong mechanism, using a phosphorylated active-site intermediate. This chain is Nucleoside diphosphate kinase, found in Bdellovibrio bacteriovorus (strain ATCC 15356 / DSM 50701 / NCIMB 9529 / HD100).